The sequence spans 173 residues: MAIILGVDPGSRITGYGVIQCLGRQQLYLGSGCIRTSGEDLPLRLKQIFDGISEIIRQYQPDEFAIERVFLAKNADSALKLGQARGAAIVAATVANLPVAEYSATQIKNAVVGTGRAKKEQVQHMIQQLLKLPAAPQADAADALGVAVCHYHTNQSLVALSGRATTRTYGRYR.

Active-site residues include aspartate 8, glutamate 67, and aspartate 139. Residues aspartate 8, glutamate 67, and aspartate 139 each coordinate Mg(2+).

Belongs to the RuvC family. In terms of assembly, homodimer which binds Holliday junction (HJ) DNA. The HJ becomes 2-fold symmetrical on binding to RuvC with unstacked arms; it has a different conformation from HJ DNA in complex with RuvA. In the full resolvosome a probable DNA-RuvA(4)-RuvB(12)-RuvC(2) complex forms which resolves the HJ. Requires Mg(2+) as cofactor.

Its subcellular location is the cytoplasm. The enzyme catalyses Endonucleolytic cleavage at a junction such as a reciprocal single-stranded crossover between two homologous DNA duplexes (Holliday junction).. Functionally, the RuvA-RuvB-RuvC complex processes Holliday junction (HJ) DNA during genetic recombination and DNA repair. Endonuclease that resolves HJ intermediates. Cleaves cruciform DNA by making single-stranded nicks across the HJ at symmetrical positions within the homologous arms, yielding a 5'-phosphate and a 3'-hydroxyl group; requires a central core of homology in the junction. The consensus cleavage sequence is 5'-(A/T)TT(C/G)-3'. Cleavage occurs on the 3'-side of the TT dinucleotide at the point of strand exchange. HJ branch migration catalyzed by RuvA-RuvB allows RuvC to scan DNA until it finds its consensus sequence, where it cleaves and resolves the cruciform DNA. The protein is Crossover junction endodeoxyribonuclease RuvC of Shewanella sp. (strain ANA-3).